Reading from the N-terminus, the 147-residue chain is Small ribosomal subunit protein uS12 (147 aa).

It belongs to the universal ribosomal protein uS12 family. Part of the 30S ribosomal subunit.

Functionally, with S4 and S5 plays an important role in translational accuracy. Located at the interface of the 30S and 50S subunits. The sequence is that of Small ribosomal subunit protein uS12 from Pyrobaculum arsenaticum (strain DSM 13514 / JCM 11321 / PZ6).